A 437-amino-acid polypeptide reads, in one-letter code: tRNA-2-methylthio-N(6)-dimethylallyladenosine synthase (437 aa).

In terms of domain architecture, MTTase N-terminal spans 1 to 115 (MKVYIETMGC…ISQVIHKEKA (115 aa)). Residues Cys-10, Cys-46, Cys-78, Cys-148, Cys-152, and Cys-155 each contribute to the [4Fe-4S] cluster site. In terms of domain architecture, Radical SAM core spans 134 to 367 (KKAQIRSLLN…QNRHKEILEE (234 aa)). One can recognise a TRAM domain in the interval 370-436 (KLEVGKTHVV…KGRLMATTKG (67 aa)).

The protein belongs to the methylthiotransferase family. MiaB subfamily. In terms of assembly, monomer. It depends on [4Fe-4S] cluster as a cofactor.

It localises to the cytoplasm. The catalysed reaction is N(6)-dimethylallyladenosine(37) in tRNA + (sulfur carrier)-SH + AH2 + 2 S-adenosyl-L-methionine = 2-methylsulfanyl-N(6)-dimethylallyladenosine(37) in tRNA + (sulfur carrier)-H + 5'-deoxyadenosine + L-methionine + A + S-adenosyl-L-homocysteine + 2 H(+). Functionally, catalyzes the methylthiolation of N6-(dimethylallyl)adenosine (i(6)A), leading to the formation of 2-methylthio-N6-(dimethylallyl)adenosine (ms(2)i(6)A) at position 37 in tRNAs that read codons beginning with uridine. The protein is tRNA-2-methylthio-N(6)-dimethylallyladenosine synthase of Helicobacter pylori (strain G27).